The sequence spans 246 residues: 1-(5-phosphoribosyl)-5-[(5-phosphoribosylamino)methylideneamino] imidazole-4-carboxamide isomerase (246 aa).

Residue aspartate 7 is the Proton acceptor of the active site. Aspartate 129 (proton donor) is an active-site residue.

This sequence belongs to the HisA/HisF family.

The protein resides in the cytoplasm. It catalyses the reaction 1-(5-phospho-beta-D-ribosyl)-5-[(5-phospho-beta-D-ribosylamino)methylideneamino]imidazole-4-carboxamide = 5-[(5-phospho-1-deoxy-D-ribulos-1-ylimino)methylamino]-1-(5-phospho-beta-D-ribosyl)imidazole-4-carboxamide. It functions in the pathway amino-acid biosynthesis; L-histidine biosynthesis; L-histidine from 5-phospho-alpha-D-ribose 1-diphosphate: step 4/9. The protein is 1-(5-phosphoribosyl)-5-[(5-phosphoribosylamino)methylideneamino] imidazole-4-carboxamide isomerase of Buchnera aphidicola subsp. Acyrthosiphon pisum (strain Tuc7).